Reading from the N-terminus, the 2328-residue chain is Genome polyprotein (2328 aa).

The region spanning 1–201 is the Peptidase C28 domain; that stretch reads MNTTDCFIAL…WKANVQRKLK (201 aa). Topologically, residues 1 to 1476 are cytoplasmic; it reads MNTTDCFIAL…SFVKRAFKRL (1476 aa). Residues cysteine 51, histidine 148, and aspartate 163 each act as for leader protease activity in the active site. Disordered stretches follow at residues 199-218 and 238-265; these read KLKG…QSGN and QLGD…NTQN. Residue glycine 202 is the site of N-myristoyl glycine; by host attachment. Composition is skewed to polar residues over residues 204–218 and 238–251; these read GQSS…QSGN and QLGD…SNEG. Residues 252–265 are compositionally biased toward low complexity; sequence STDTTSTHTTNTQN. Positions 787–795 are antigenic epitope; it reads ALLRAATYY. Residues 865 to 867 carry the Cell attachment site motif; the sequence is RGD. One can recognise an SF3 helicase domain in the interval 1185–1349; it reads NTHIANLCKV…DGYKINNKLD (165 aa). ATP is bound at residue 1213-1220; it reads GKSGQGKS. Residues 1477–1497 lie within the membrane without spanning it; sequence KENFEIVALCLTLLANIVIMI. Over 1498-2328 the chain is Cytoplasmic; the sequence is RETRKRQQMV…RWVNAVCGDA (831 aa). 2 stretches are compositionally biased toward basic and acidic residues: residues 1525-1534 and 1545-1559; these read KTLDEAEKNP and FRER…RDDV. Residues 1525–1580 form a disordered region; that stretch reads KTLDEAEKNPLETSGASTVGFRERTLPGHKARDDVNSEPAQPVEEQPQAEGPYAGP. Residues tyrosine 1577, tyrosine 1600, and tyrosine 1624 each carry the O-(5'-phospho-RNA)-tyrosine modification. Residues 1648–1844 form the Peptidase C3 domain; the sequence is APPTDLQKMV…YCSCVSRSML (197 aa). The active-site For protease 3C activity; Proton donor/acceptor is the histidine 1691. Residues aspartate 1729 and cysteine 1808 each act as for protease 3C activity in the active site. The Nuclear localization signal signature appears at 1874–1882; sequence MRKTKLAPT. One can recognise a RdRp catalytic domain in the interval 2092–2210; sequence RNVWDVDYSA…ASDYDLDFEA (119 aa). Aspartate 2196 acts as the For RdRp activity in catalysis.

Belongs to the picornaviruses polyprotein family. As to quaternary structure, interacts with host ISG15. In terms of assembly, interacts (via R-G-D motif) with host ITGAV/ITGB6. Interacts with host MAVS; this interaction inhibits binding of host TRAF3 to MAVS, thereby suppressing interferon-mediated responses. Forms homooligomers. As to quaternary structure, homohexamer. Interacts with host VIM. Interacts with host BECN1. In terms of assembly, interacts with host DCTN3. Interacts with RNA-dependent RNA polymerase; this interaction allows 3B-1 to binds 2 polymerases and act as a primer. It also allows the recruitment of the RNA-dependent RNA polymerase to host membranes. As to quaternary structure, interacts with RNA-dependent RNA polymerase; this interaction allows 3B-2 to act as a primer. In terms of assembly, interacts with RNA-dependent RNA polymerase; this interaction allows 3B-3 to act as a primer. Interacts with 3B-1; this interaction allows 3B-1 to binds 2 polymerases and act as a primer. It also allows the recruitment of the RNA-dependent RNA polymerase to host membranes. Interacts with 3B-2; this interaction allows 3B-2 to act as a primer. Interacts with 3B-3; this interaction allows 3B-3 to act as a primer. Removes six residues from its own C-terminus, generating sLb(pro). Post-translationally, specific enzymatic cleavages in vivo by the viral proteases yield a variety of precursors and mature proteins. The polyprotein seems to be cotranslationally cleaved at the 2A/2B junction by a ribosomal skip from one codon to the next without formation of a peptide bond. This process would release the L-P1-2A peptide from the translational complex. In terms of processing, during virion maturation, immature virions are rendered infectious following cleavage of VP0 into VP4 and VP2. This maturation seems to be an autocatalytic event triggered by the presence of RNA in the capsid and is followed by a conformational change of the particle. Myristoylation is required during RNA encapsidation and formation of the mature virus particle. Post-translationally, uridylylated by the polymerase and covalently linked to the 5'-end of genomic RNA. These uridylylated forms act as a nucleotide-peptide primer for the polymerase.

It is found in the host nucleus. The protein resides in the host cytoplasm. It localises to the virion. Its subcellular location is the host endoplasmic reticulum membrane. The protein localises to the host cytoplasmic vesicle membrane. The catalysed reaction is Autocatalytically cleaves itself from the polyprotein of the foot-and-mouth disease virus by hydrolysis of a Lys-|-Gly bond, but then cleaves host cell initiation factor eIF-4G at bonds -Gly-|-Arg- and -Lys-|-Arg-.. The enzyme catalyses a ribonucleoside 5'-triphosphate + H2O = a ribonucleoside 5'-diphosphate + phosphate + H(+). It carries out the reaction RNA(n) + a ribonucleoside 5'-triphosphate = RNA(n+1) + diphosphate. It catalyses the reaction Selective cleavage of Gln-|-Gly bond in the poliovirus polyprotein. In other picornavirus reactions Glu may be substituted for Gln, and Ser or Thr for Gly.. Functionally, autocatalytically cleaves itself from the polyprotein at the L/VP0 junction. Also cleaves the host translation initiation factors EIF4G1 and EIF4G3, in order to shut off the capped cellular mRNA transcription. Plays a role in counteracting host innate antiviral response using diverse mechanisms. Possesses a deubiquitinase activity acting on both 'Lys-48' and 'Lys-63'-linked polyubiquitin chains. In turn, inhibits the ubiquitination and subsequent activation of key signaling molecules of type I IFN response such as host RIGI, TBK1, TRAF3 and TRAF6. Inhibits host NF-kappa-B activity by inducing a decrease in RELA mRNA levels. Cleaves a peptide bond in the C-terminus of host ISG15, resulting in the damaging of this modifier that can no longer be attached to target proteins. Also cleaves host G3BP1 and G3BP2 in order to inhibit cytoplasmic stress granules assembly. Its function is as follows. Lies on the inner surface of the capsid shell. After binding to the host receptor, the capsid undergoes conformational changes. Capsid protein VP4 is released, capsid protein VP1 N-terminus is externalized, and together, they shape a pore in the host membrane through which the viral genome is translocated into the host cell cytoplasm. After genome has been released, the channel shrinks. In terms of biological role, forms an icosahedral capsid of pseudo T=3 symmetry with capsid proteins VP1 and VP3. The capsid is composed of 60 copies of each capsid protein organized in the form of twelve pentamers and encloses the viral positive strand RNA genome. Upon acidifcation in the endosome, dissociates into pentamers. Forms an icosahedral capsid of pseudo T=3 symmetry with capsid proteins VP0 and VP3. The capsid is composed of 60 copies of each capsid protein organized in the form of twelve pentamers and encloses the viral positive strand RNA genome. Upon acidifcation in the endosome, dissociates into pentamers. Functionally, forms an icosahedral capsid of pseudo T=3 symmetry with capsid proteins VP2 and VP3. The capsid is composed of 60 copies of each capsid protein organized in the form of twelve pentamers and encloses the viral positive strand RNA genome. Mediates cell entry by attachment to an integrin receptor, usually host ITGAV/ITGB6. In addition, targets host MAVS to suppress type I IFN pathway. Upon acidifcation in the endosome, dissociates into pentamers. Its function is as follows. Mediates self-processing of the polyprotein by a translational effect termed 'ribosome skipping'. Mechanistically, 2A-mediated cleavage occurs between the C-terminal glycine and the proline of the downstream protein 2B. In the case of foot-and-mouth disease virus, the 2A oligopeptide is post-translationally 'trimmed' from the C-terminus of the upstream protein 1D by 3C proteinase. In terms of biological role, plays an essential role in the virus replication cycle by acting as a viroporin. Creates a pore in the host endoplasmic reticulum and as a consequence releases Ca2+ in the cytoplasm of infected cell. In turn, high levels of cytoplasmic calcium may trigger membrane trafficking and transport of viral ER-associated proteins to viroplasms, sites of viral genome replication. Associates with and induces structural rearrangements of intracellular membranes. Triggers host autophagy by interacting with host BECN1 and thereby promotes viral replication. Participates in viral replication and interacts with host DHX9. Displays RNA-binding, nucleotide binding and NTPase activities. May play a role in virion morphogenesis and viral RNA encapsidation by interacting with the capsid protein VP3. Functionally, plays important roles in virus replication, virulence and host range. Cooperates with host DDX56 to inhibit IRF3 nuclear translocation and subsequent type I interferon production. Its function is as follows. Covalently linked to the 5'-end of both the positive-strand and negative-strand genomic RNAs. Acts as a genome-linked replication primer. In terms of biological role, cysteine protease that generates mature viral proteins from the precursor polyprotein. In addition to its proteolytic activity, binds to viral RNA and thus influences viral genome replication. RNA and substrate bind cooperatively to the protease. RNA-directed RNA polymerase 3D-POL replicates genomic and antigenomic RNA by recognizing replications specific signals. Covalently attaches UMP to a tyrosine of VPg, which is used to prime RNA synthesis. The positive stranded RNA genome is first replicated at virus induced membranous vesicles, creating a dsRNA genomic replication form. This dsRNA is then used as template to synthesize positive stranded RNA genomes. ss(+)RNA genomes are either translated, replicated or encapsidated. In Bos taurus (Bovine), this protein is Genome polyprotein.